The primary structure comprises 811 residues: Receptor-like protein 52 (811 aa).

Residues M1 to S22 form the signal peptide. Residues Q23–T770 are Extracellular-facing. N47, N64, N74, N93, N109, and N124 each carry an N-linked (GlcNAc...) asparagine glycan. 6 LRR repeats span residues A62–F86, P87–C110, K112–L134, A135–I159, K161–L183, and S184–K208. Residues K211–N233 form an LRR 7; degenerate repeat. N233, N246, N260, N295, and N304 each carry an N-linked (GlcNAc...) asparagine glycan. LRR repeat units follow at residues M234 to L258, N260 to A281, K282 to L305, N307 to L329, P330 to S354, L356 to G377, K379 to C401, and T403 to N427. N-linked (GlcNAc...) asparagine glycosylation is found at N389, N422, N429, N455, N464, and N485. LRR repeat units lie at residues L441–L465, S466–S489, K491–I511, S512–Q537, Q539–F557, S558–N581, L625–L649, K650–L673, I674–L697, and Y699–T722. The N-linked (GlcNAc...) asparagine glycan is linked to N525. N-linked (GlcNAc...) asparagine glycans are attached at residues N571 and N581. The N-linked (GlcNAc...) asparagine glycan is linked to N656. N-linked (GlcNAc...) asparagine glycosylation occurs at N704. Residues A771–V791 form a helical membrane-spanning segment. At S792 to I811 the chain is on the cytoplasmic side.

This sequence belongs to the RLP family.

Its subcellular location is the cell membrane. Its function is as follows. Required for defense against powdery mildew pathogen. This chain is Receptor-like protein 52, found in Arabidopsis thaliana (Mouse-ear cress).